A 511-amino-acid chain; its full sequence is MLNSVIKRSALCRFKFTCLQVSECRPAQIEISKRLYSAKASGNGEYDLCVIGGGPGGYVAAIRGAQLGLKTICVEKRGTLGGTCLNVGCIPSKALLNNSHIYHTVKHDTKRRGIDVSGVSVNLSQMMKAKDDSVKSLTSGIEYLFKKNKVEYAKGTGSFIDPQTLSVKGIDGAADQTIKAKNFIIATGSEVKPFPGVTIDEKKIVSSTGALSLSEVPKKMTVLGGGIIGLEMGSVWSRLGAEVTVVEFLPAVGGPMDADISKALSRIISKQGIKFKTSTKLLSAKVNGDSVEVEIENMKNNKRETYQTDVLLVAIGRVPYTEGLGLDKLGISMDKSNRVIMDSEYRTNIPHIRVIGDATLGPMLAHKAEDEGIAAVEYIAKGQGHVNYNCIPAVMYTHPEVAWVGITEQKAKESGIKYRIGTFPFSANSRAKTNMDADGLVKVIVDAETDRLLGVHMIGPMAGELIGEATLALEYGASAEDVARVCHAHPTLSEATKEAMMAAWCGKSIHF.

FAD is bound by residues 75-84, Lys-93, Gly-157, and 187-189; these read EKRGTLGGTC and TGS. Residues Cys-84 and Cys-89 are joined by a disulfide bond. NAD(+) is bound by residues 224–231, Glu-247, Leu-281, and Gly-316; that span reads GGGIIGLE. Residues Asp-357 and 363–366 contribute to the FAD site; that span reads MLAH. His-489 acts as the Proton acceptor in catalysis.

This sequence belongs to the class-I pyridine nucleotide-disulfide oxidoreductase family. As to quaternary structure, homodimer. FAD is required as a cofactor.

The protein localises to the mitochondrion matrix. The enzyme catalyses N(6)-[(R)-dihydrolipoyl]-L-lysyl-[protein] + NAD(+) = N(6)-[(R)-lipoyl]-L-lysyl-[protein] + NADH + H(+). Lipoamide dehydrogenase is a component of the alpha-ketoacid dehydrogenase complexes. Malfunction of this protein blocks the progression of cell cycle from G1 to S phase. This chain is Dihydrolipoyl dehydrogenase, mitochondrial (dld1), found in Schizosaccharomyces pombe (strain 972 / ATCC 24843) (Fission yeast).